The primary structure comprises 500 residues: L-arabinose isomerase (500 aa).

Glu306, Glu331, His348, and His447 together coordinate Mn(2+).

Belongs to the arabinose isomerase family. It depends on Mn(2+) as a cofactor.

It catalyses the reaction beta-L-arabinopyranose = L-ribulose. The protein operates within carbohydrate degradation; L-arabinose degradation via L-ribulose; D-xylulose 5-phosphate from L-arabinose (bacterial route): step 1/3. Its function is as follows. Catalyzes the conversion of L-arabinose to L-ribulose. The sequence is that of L-arabinose isomerase from Anoxybacillus flavithermus (strain DSM 21510 / WK1).